The primary structure comprises 109 residues: MEVKAIHRGARISAQKTRLVADQIRGLPVDKALNVLTFSPKKAAGIVKKVVLSAIANAEHNEGADIDELKITSIYIDKAASLKRFTARAKGRGNRIEKQSCHITVTVGN.

This sequence belongs to the universal ribosomal protein uL22 family. Part of the 50S ribosomal subunit.

In terms of biological role, this protein binds specifically to 23S rRNA; its binding is stimulated by other ribosomal proteins, e.g. L4, L17, and L20. It is important during the early stages of 50S assembly. It makes multiple contacts with different domains of the 23S rRNA in the assembled 50S subunit and ribosome. Its function is as follows. The globular domain of the protein is located near the polypeptide exit tunnel on the outside of the subunit, while an extended beta-hairpin is found that lines the wall of the exit tunnel in the center of the 70S ribosome. The protein is Large ribosomal subunit protein uL22 of Paraburkholderia xenovorans (strain LB400).